A 332-amino-acid chain; its full sequence is Polyprenyl transferase yanG (332 aa).

A run of 8 helical transmembrane segments spans residues 42 to 62 (IWGACVAAGVSDTVLEPLAFA), 72 to 92 (VTATHCAFCTFKSVPFCFFVV), 145 to 165 (PAVTVSFIPVWVLSVIYPFMK), 170 to 190 (FPQVVLGAIIGGAVFPGWVGV), 200 to 220 (ALPLFFATAAWVVYFDVFYAT), 242 to 262 (VKILLAGLGILQIAFFAMTAL), 266 to 286 (LSLIFWILGIGVWAVSVPWHV), and 300 to 320 (VFKANIKLGLYMTGVSLLELV).

The protein belongs to the UbiA prenyltransferase family. Mg(2+) serves as cofactor.

It localises to the membrane. It functions in the pathway secondary metabolite biosynthesis; terpenoid biosynthesis. Polyprenyl transferase; part of the gene cluster that mediates the biosynthesis of yanuthone D, a fungal isoprenoid epoxycyclohexenone that acts as an antibiotic against fungi and bacteria. The first step of the pathway is the synthesis of 6-methylsalicylic acid (6-MSA) by the polyketide synthase yanA. 6-MSA is then converted to m-cresol by the decarboxylase yanB. The cytochrome P450 monooxygenase yanC then catalyzes the oxidation of m-cresol to toluquinol. Epoxidation of toluquinol is then performed by the short chain dehydrogenase yanD, with the help of yanE, and a further prenylation by yanG leads to 7-deacetoxyyanuthone A. The next step is the hydroxylation of C-22 of 7-deacetoxyyanuthone A by the cytochrome P450 monooxygenase yanH to yield 22-deacetylyanuthone A. O-Mevalon transferase yanI then attaches mevalon to the hydroxyl group of 22-deacetylyanuthone A to produce yanuthone E. Finally, the FAD-dependent monooxygenase yanF oxidizes the hydroxyl group at C15 of yanuthone E to form yanuthone D. Furthermore, several branching points in the pathway lead to the production of yanuthones F and G from 7-deacetoxyyanuthone A; yanuthones H and I from 22-deacetylyanuthone A; and yanuthone J from yanuthone E. YanG is also involved in the synthesis of yanuthone X1 which does not have 6-methylsalicylic acid (6-MSA) as precursor. This chain is Polyprenyl transferase yanG, found in Aspergillus niger (strain ATCC 1015 / CBS 113.46 / FGSC A1144 / LSHB Ac4 / NCTC 3858a / NRRL 328 / USDA 3528.7).